We begin with the raw amino-acid sequence, 326 residues long: 4-hydroxythreonine-4-phosphate dehydrogenase (326 aa).

Residues His-132 and Thr-133 each contribute to the substrate site. A divalent metal cation contacts are provided by His-162, His-207, and His-262. Substrate is bound by residues Lys-270, Asn-279, and Arg-288.

It belongs to the PdxA family. As to quaternary structure, homodimer. Zn(2+) serves as cofactor. The cofactor is Mg(2+). Requires Co(2+) as cofactor.

The protein localises to the cytoplasm. It carries out the reaction 4-(phosphooxy)-L-threonine + NAD(+) = 3-amino-2-oxopropyl phosphate + CO2 + NADH. It participates in cofactor biosynthesis; pyridoxine 5'-phosphate biosynthesis; pyridoxine 5'-phosphate from D-erythrose 4-phosphate: step 4/5. Catalyzes the NAD(P)-dependent oxidation of 4-(phosphooxy)-L-threonine (HTP) into 2-amino-3-oxo-4-(phosphooxy)butyric acid which spontaneously decarboxylates to form 3-amino-2-oxopropyl phosphate (AHAP). The polypeptide is 4-hydroxythreonine-4-phosphate dehydrogenase (Ruegeria sp. (strain TM1040) (Silicibacter sp.)).